A 227-amino-acid chain; its full sequence is Uracil-DNA glycosylase (227 aa).

The Proton acceptor role is filled by aspartate 68.

The protein belongs to the uracil-DNA glycosylase (UDG) superfamily. UNG family.

It is found in the cytoplasm. It carries out the reaction Hydrolyzes single-stranded DNA or mismatched double-stranded DNA and polynucleotides, releasing free uracil.. Functionally, excises uracil residues from the DNA which can arise as a result of misincorporation of dUMP residues by DNA polymerase or due to deamination of cytosine. The polypeptide is Uracil-DNA glycosylase (Mycobacterium ulcerans (strain Agy99)).